The primary structure comprises 131 residues: D-ribose pyranase (131 aa).

The active-site Proton donor is His20. Residues Asp28, His98, and 120 to 122 contribute to the substrate site; that span reads YAN.

It belongs to the RbsD / FucU family. RbsD subfamily. Homodecamer.

It is found in the cytoplasm. The enzyme catalyses beta-D-ribopyranose = beta-D-ribofuranose. The protein operates within carbohydrate metabolism; D-ribose degradation; D-ribose 5-phosphate from beta-D-ribopyranose: step 1/2. Catalyzes the interconversion of beta-pyran and beta-furan forms of D-ribose. The protein is D-ribose pyranase of Clostridium perfringens (strain ATCC 13124 / DSM 756 / JCM 1290 / NCIMB 6125 / NCTC 8237 / Type A).